A 98-amino-acid polypeptide reads, in one-letter code: NADH-ubiquinone oxidoreductase chain 4L (98 aa).

3 helical membrane-spanning segments follow: residues 1–21 (MPSI…GMLI), 29–49 (SLLC…LTAL), and 61–81 (IVLL…LVMV).

This sequence belongs to the complex I subunit 4L family. In terms of assembly, core subunit of respiratory chain NADH dehydrogenase (Complex I) which is composed of 45 different subunits.

It localises to the mitochondrion inner membrane. It carries out the reaction a ubiquinone + NADH + 5 H(+)(in) = a ubiquinol + NAD(+) + 4 H(+)(out). Core subunit of the mitochondrial membrane respiratory chain NADH dehydrogenase (Complex I) which catalyzes electron transfer from NADH through the respiratory chain, using ubiquinone as an electron acceptor. Part of the enzyme membrane arm which is embedded in the lipid bilayer and involved in proton translocation. This chain is NADH-ubiquinone oxidoreductase chain 4L (MT-ND4L), found in Lepus europaeus (European hare).